Reading from the N-terminus, the 502-residue chain is Probable cytochrome P450 554A1 (502 aa).

The chain crosses the membrane as a helical span at residues 3-20 (LLLFIFFLILFYYSVKYY). Residue cysteine 448 coordinates heme.

The protein belongs to the cytochrome P450 family. The cofactor is heme.

It localises to the membrane. This Dictyostelium discoideum (Social amoeba) protein is Probable cytochrome P450 554A1 (cyp554A1).